The chain runs to 457 residues: Casein kinase 1-like protein 11 (457 aa).

The region spanning 15–284 is the Protein kinase domain; sequence FKLGRKLGSG…LRRLFRDLFI (270 aa). ATP contacts are provided by residues 21–29 and Lys-44; that span reads LGSGSFGEL. The active-site Proton acceptor is the Asp-134. Disordered regions lie at residues 305–337 and 352–442; these read GSSS…GQDL and NVSS…EDAI. The segment covering 311–324 has biased composition (pro residues); it reads RPTPRPALDPPGPP. Polar residues-rich tracts occupy residues 383–403 and 409–429; these read NGST…SAEP and SRLF…QSYE.

It belongs to the protein kinase superfamily. CK1 Ser/Thr protein kinase family. Casein kinase I subfamily. Monomer. Autophosphorylated.

The protein localises to the cytoplasm. It localises to the nucleus. It carries out the reaction L-seryl-[protein] + ATP = O-phospho-L-seryl-[protein] + ADP + H(+). It catalyses the reaction L-threonyl-[protein] + ATP = O-phospho-L-threonyl-[protein] + ADP + H(+). Its activity is regulated as follows. Partially inhibited by N-(2-aminoethyl)-5-chloroisoquinoline-8-sulfonamide (CKI-7). In terms of biological role, casein kinases are operationally defined by their preferential utilization of acidic proteins such as caseins as substrates. Can phosphorylate casein, phosvitin, myosin light chains and poly(Glu,Tyr) in vitro. The protein is Casein kinase 1-like protein 11 of Arabidopsis thaliana (Mouse-ear cress).